The chain runs to 288 residues: uncharacterized protein (288 aa).

Residues Leu-92 to Ile-112 form a helical membrane-spanning segment. The disordered stretch occupies residues Asp-121–Ala-183. Basic and acidic residues-rich tracts occupy residues Ser-136–Leu-146 and Ser-154–Ile-181. Positions Lys-147–Gly-185 form a coiled coil.

It localises to the cell membrane. This is an uncharacterized protein from Bacillus subtilis (strain 168).